We begin with the raw amino-acid sequence, 482 residues long: tRNA sulfurtransferase (482 aa).

Residues 61 to 165 (LAIRDALTRI…DDRLLLIKGR (105 aa)) form the THUMP domain. ATP contacts are provided by residues 183–184 (LI), Lys-265, Gly-287, and Gln-296. The cysteines at positions 344 and 456 are disulfide-linked. The Rhodanese domain maps to 404 to 482 (FGPNDVILDI…GFNNVKVYRP (79 aa)). Cys-456 (cysteine persulfide intermediate) is an active-site residue.

The protein belongs to the ThiI family.

It localises to the cytoplasm. It carries out the reaction [ThiI sulfur-carrier protein]-S-sulfanyl-L-cysteine + a uridine in tRNA + 2 reduced [2Fe-2S]-[ferredoxin] + ATP + H(+) = [ThiI sulfur-carrier protein]-L-cysteine + a 4-thiouridine in tRNA + 2 oxidized [2Fe-2S]-[ferredoxin] + AMP + diphosphate. The catalysed reaction is [ThiS sulfur-carrier protein]-C-terminal Gly-Gly-AMP + S-sulfanyl-L-cysteinyl-[cysteine desulfurase] + AH2 = [ThiS sulfur-carrier protein]-C-terminal-Gly-aminoethanethioate + L-cysteinyl-[cysteine desulfurase] + A + AMP + 2 H(+). The protein operates within cofactor biosynthesis; thiamine diphosphate biosynthesis. Its function is as follows. Catalyzes the ATP-dependent transfer of a sulfur to tRNA to produce 4-thiouridine in position 8 of tRNAs, which functions as a near-UV photosensor. Also catalyzes the transfer of sulfur to the sulfur carrier protein ThiS, forming ThiS-thiocarboxylate. This is a step in the synthesis of thiazole, in the thiamine biosynthesis pathway. The sulfur is donated as persulfide by IscS. This chain is tRNA sulfurtransferase, found in Escherichia coli O139:H28 (strain E24377A / ETEC).